Here is a 90-residue protein sequence, read N- to C-terminus: YcgL domain-containing protein plu2139 (90 aa).

Positions Met1–Leu85 constitute a YcgL domain.

The polypeptide is YcgL domain-containing protein plu2139 (Photorhabdus laumondii subsp. laumondii (strain DSM 15139 / CIP 105565 / TT01) (Photorhabdus luminescens subsp. laumondii)).